A 303-amino-acid polypeptide reads, in one-letter code: D-alanine--D-alanine ligase B (303 aa).

An ATP-grasp domain is found at 103 to 298 (KLLWKGAGLP…YEDLCLKVLD (196 aa)). Residue 129–184 (ERQLGLPIFVKPSTEGSSIGVTKVKQPGELRAAFEEARKYDKVVIAEQFIGGGEYT) coordinates ATP. D252, E265, and N267 together coordinate Mg(2+).

The protein belongs to the D-alanine--D-alanine ligase family. Mg(2+) is required as a cofactor. The cofactor is Mn(2+).

Its subcellular location is the cytoplasm. The enzyme catalyses 2 D-alanine + ATP = D-alanyl-D-alanine + ADP + phosphate + H(+). It participates in cell wall biogenesis; peptidoglycan biosynthesis. Cell wall formation. In Chromobacterium violaceum (strain ATCC 12472 / DSM 30191 / JCM 1249 / CCUG 213 / NBRC 12614 / NCIMB 9131 / NCTC 9757 / MK), this protein is D-alanine--D-alanine ligase B.